Consider the following 75-residue polypeptide: Tautomerase PptA (75 aa).

Pro-2 acts as the Proton acceptor; via imino nitrogen in catalysis.

It belongs to the 4-oxalocrotonate tautomerase family. PptA subfamily. In terms of assembly, homodimer.

Its subcellular location is the cytoplasm. The polypeptide is Tautomerase PptA (Escherichia coli O127:H6 (strain E2348/69 / EPEC)).